The sequence spans 254 residues: 5-oxoprolinase subunit A (254 aa).

Belongs to the LamB/PxpA family. Forms a complex composed of PxpA, PxpB and PxpC.

The catalysed reaction is 5-oxo-L-proline + ATP + 2 H2O = L-glutamate + ADP + phosphate + H(+). In terms of biological role, catalyzes the cleavage of 5-oxoproline to form L-glutamate coupled to the hydrolysis of ATP to ADP and inorganic phosphate. The sequence is that of 5-oxoprolinase subunit A from Burkholderia mallei (strain NCTC 10247).